The chain runs to 103 residues: Large ribosomal subunit protein bL21 (103 aa).

This sequence belongs to the bacterial ribosomal protein bL21 family. In terms of assembly, part of the 50S ribosomal subunit. Contacts protein L20.

Functionally, this protein binds to 23S rRNA in the presence of protein L20. This Maridesulfovibrio salexigens (strain ATCC 14822 / DSM 2638 / NCIMB 8403 / VKM B-1763) (Desulfovibrio salexigens) protein is Large ribosomal subunit protein bL21.